A 102-amino-acid polypeptide reads, in one-letter code: Small ribosomal subunit protein uS10 (102 aa).

It belongs to the universal ribosomal protein uS10 family. Part of the 30S ribosomal subunit.

Its function is as follows. Involved in the binding of tRNA to the ribosomes. In Bacillus thuringiensis (strain Al Hakam), this protein is Small ribosomal subunit protein uS10.